The sequence spans 364 residues: Putative agmatine deiminase 1 (364 aa).

C356 functions as the Amidino-cysteine intermediate in the catalytic mechanism.

Belongs to the agmatine deiminase family.

The enzyme catalyses agmatine + H2O = N-carbamoylputrescine + NH4(+). This Listeria monocytogenes serotype 4b (strain F2365) protein is Putative agmatine deiminase 1.